The chain runs to 171 residues: Small ribosomal subunit protein mS25 (171 aa).

The protein belongs to the mitochondrion-specific ribosomal protein mS25 family. Component of the mitochondrial ribosome small subunit (28S) which comprises a 12S rRNA and about 30 distinct proteins.

The protein localises to the mitochondrion. This chain is Small ribosomal subunit protein mS25 (Mrps25), found in Rattus norvegicus (Rat).